The following is a 602-amino-acid chain: Bifunctional xylanase/deacetylase (602 aa).

The first 14 residues, 1 to 14 (MSATLLVPSMTVKA), serve as a signal peptide directing secretion. Residues 17–211 (TIYNNKTGNQ…SSGSASVYKN (195 aa)) enclose the GH11 domain. Catalysis depends on Glu108, which acts as the Nucleophile. Glu198 functions as the Proton donor in the catalytic mechanism. The disordered stretch occupies residues 216–240 (GGSSSSSGNQGGNQGGNTGNENAGN). The span at 224–233 (NQGGNQGGNT) shows a compositional bias: gly residues. One can recognise a CBM6 domain in the interval 249–366 (DKIQCETMTK…DAYLDYFNNS (118 aa)). The NodB homology domain occupies 402-578 (KLIALTFDDG…GLKNQGYTFV (177 aa)).

Belongs to the glycosyl hydrolase 11 (cellulase G) family. In terms of processing, in the later growth phases, seems to undergo a proteolytic cleavage into a 30 kDa protein possessing xylanolytic activity.

It is found in the secreted. The catalysed reaction is Endohydrolysis of (1-&gt;4)-beta-D-xylosidic linkages in xylans.. It participates in glycan degradation; xylan degradation. Endo-acting xylanase which specifically cleaves internal linkages on the xylan backbone, releasing xylooligosaccharides. Is also probably able, via its C-terminal domain, to remove acetyl groups from acetylated xylan, and thus it is probably capable of hydrolyzing acetylated xylan. This is Bifunctional xylanase/deacetylase (xyn11A) from Pseudobutyrivibrio xylanivorans.